Reading from the N-terminus, the 321-residue chain is Ornithine carbamoyltransferase (321 aa).

Carbamoyl phosphate contacts are provided by residues 53-56, glutamine 80, arginine 104, and 131-134; these read STRT and HPCQ. L-ornithine is bound by residues asparagine 166, aspartate 230, and 234-235; that span reads SM. Carbamoyl phosphate contacts are provided by residues 270 to 271 and arginine 298; that span reads CL.

Belongs to the aspartate/ornithine carbamoyltransferase superfamily. OTCase family.

It is found in the cytoplasm. The catalysed reaction is carbamoyl phosphate + L-ornithine = L-citrulline + phosphate + H(+). The protein operates within amino-acid degradation; L-arginine degradation via ADI pathway; carbamoyl phosphate from L-arginine: step 2/2. In terms of biological role, reversibly catalyzes the transfer of the carbamoyl group from carbamoyl phosphate (CP) to the N(epsilon) atom of ornithine (ORN) to produce L-citrulline. The sequence is that of Ornithine carbamoyltransferase from Bifidobacterium longum subsp. infantis (strain ATCC 15697 / DSM 20088 / JCM 1222 / NCTC 11817 / S12).